The chain runs to 125 residues: Large ribosomal subunit protein bL12 (125 aa).

Belongs to the bacterial ribosomal protein bL12 family. In terms of assembly, homodimer. Part of the ribosomal stalk of the 50S ribosomal subunit. Forms a multimeric L10(L12)X complex, where L10 forms an elongated spine to which 2 to 4 L12 dimers bind in a sequential fashion. Binds GTP-bound translation factors.

In terms of biological role, forms part of the ribosomal stalk which helps the ribosome interact with GTP-bound translation factors. Is thus essential for accurate translation. The chain is Large ribosomal subunit protein bL12 from Heliobacterium modesticaldum (strain ATCC 51547 / Ice1).